We begin with the raw amino-acid sequence, 279 residues long: DNA repair protein RecO (279 aa).

This sequence belongs to the RecO family.

Involved in DNA repair and RecF pathway recombination. This chain is DNA repair protein RecO, found in Thermosynechococcus vestitus (strain NIES-2133 / IAM M-273 / BP-1).